Reading from the N-terminus, the 732-residue chain is Cullin-3B (732 aa).

One can recognise a Cullin neddylation domain in the interval D662–D724. K676 is covalently cross-linked (Glycyl lysine isopeptide (Lys-Gly) (interchain with G-Cter in NEDD8)).

The protein belongs to the cullin family. Interacts with BTB/POZ-MATH proteins BPM1 and BPM3. Post-translationally, neddylated. Deneddylated via its interaction with the COP9 signalosome (CSN) complex.

The protein operates within protein modification; protein ubiquitination. Its function is as follows. Component of the cullin-RING ubiquitin ligases (CRL), or CUL3-RBX1-BTB protein E3 ligase complexes which mediate the ubiquitination and subsequent proteasomal degradation of target proteins. The functional specificity of the CRL complex depends on the BTB domain-containing protein as the substrate recognition component. Involved in embryo pattern formation and endosperm development. Required for the normal division and organization of the root stem cells and columella root cap cells. Regulates primary root growth by an unknown pathway, but in an ethylene-dependent manner. Functions in distal root patterning, by an ethylene-independent mechanism. Functionally redundant with CUL3A. This Arabidopsis thaliana (Mouse-ear cress) protein is Cullin-3B (CUL3B).